Consider the following 113-residue polypeptide: Colipase (113 aa).

Residues 1–18 (MEKVLVLLLVSLLAVAYA) form the signal peptide. A propeptide spans 19 to 23 (APGPR) (enterostatin, activation peptide). 5 disulfide bridges follow: Cys35–Cys46, Cys41–Cys57, Cys45–Cys79, Cys67–Cys87, and Cys81–Cys105.

It belongs to the colipase family. As to quaternary structure, forms a 1:1 stoichiometric complex with pancreatic lipase. In terms of tissue distribution, expressed by the pancreas.

It localises to the secreted. In terms of biological role, colipase is a cofactor of pancreatic lipase. It allows the lipase to anchor itself to the lipid-water interface. Without colipase the enzyme is washed off by bile salts, which have an inhibitory effect on the lipase. Its function is as follows. Enterostatin has a biological activity as a satiety signal. In Mus musculus (Mouse), this protein is Colipase.